The primary structure comprises 372 residues: Glutamate 5-kinase (372 aa).

K14 contributes to the ATP binding site. Substrate is bound by residues S54, D141, and N153. 173-174 (TD) is a binding site for ATP. The 79-residue stretch at 280-358 (RGTLVLDDGA…DAIESLLGYS (79 aa)) folds into the PUA domain.

Belongs to the glutamate 5-kinase family.

It localises to the cytoplasm. It catalyses the reaction L-glutamate + ATP = L-glutamyl 5-phosphate + ADP. It participates in amino-acid biosynthesis; L-proline biosynthesis; L-glutamate 5-semialdehyde from L-glutamate: step 1/2. Functionally, catalyzes the transfer of a phosphate group to glutamate to form L-glutamate 5-phosphate. The chain is Glutamate 5-kinase from Pseudomonas entomophila (strain L48).